An 86-amino-acid polypeptide reads, in one-letter code: Large ribosomal subunit protein eL31 (86 aa).

It belongs to the eukaryotic ribosomal protein eL31 family.

The sequence is that of Large ribosomal subunit protein eL31 from Methanopyrus kandleri (strain AV19 / DSM 6324 / JCM 9639 / NBRC 100938).